Here is a 290-residue protein sequence, read N- to C-terminus: UPF0761 membrane protein YihY (290 aa).

The next 6 membrane-spanning stretches (helical) occupy residues 44–64, 104–124, 140–160, 183–203, 210–230, and 244–264; these read LLSL…FPMF, VGAC…DSAL, FAVY…SLAI, IFPL…VPTI, AIVG…GFAL, and VLAV…IVLL.

Belongs to the UPF0761 family.

The protein resides in the cell inner membrane. This is UPF0761 membrane protein YihY from Escherichia coli O7:K1 (strain IAI39 / ExPEC).